The following is a 274-amino-acid chain: Large ribosomal subunit protein uL2 (274 aa).

The disordered stretch occupies residues 223 to 274; sequence VAMNPVDHPHGGGEGRTSGGRHPVTPWGVPTKGYKTRSNKRTDKYIVRRRNK.

It belongs to the universal ribosomal protein uL2 family. Part of the 50S ribosomal subunit. Forms a bridge to the 30S subunit in the 70S ribosome.

Its function is as follows. One of the primary rRNA binding proteins. Required for association of the 30S and 50S subunits to form the 70S ribosome, for tRNA binding and peptide bond formation. It has been suggested to have peptidyltransferase activity; this is somewhat controversial. Makes several contacts with the 16S rRNA in the 70S ribosome. This Shewanella baltica (strain OS223) protein is Large ribosomal subunit protein uL2.